The chain runs to 346 residues: DNA polymerase IV 2 (346 aa).

The region spanning 9 to 191 is the UmuC domain; sequence ILHVDLDQFL…RTVEALWGVG (183 aa). Mg(2+) contacts are provided by Asp13 and Asp111. Glu112 is an active-site residue.

The protein belongs to the DNA polymerase type-Y family. Monomer. Mg(2+) serves as cofactor.

Its subcellular location is the cytoplasm. The catalysed reaction is DNA(n) + a 2'-deoxyribonucleoside 5'-triphosphate = DNA(n+1) + diphosphate. Functionally, poorly processive, error-prone DNA polymerase involved in untargeted mutagenesis. Copies undamaged DNA at stalled replication forks, which arise in vivo from mismatched or misaligned primer ends. These misaligned primers can be extended by PolIV. Exhibits no 3'-5' exonuclease (proofreading) activity. May be involved in translesional synthesis, in conjunction with the beta clamp from PolIII. In Mycobacterium bovis (strain ATCC BAA-935 / AF2122/97), this protein is DNA polymerase IV 2 (dinB2).